The sequence spans 144 residues: NADH dehydrogenase [ubiquinone] 1 alpha subcomplex subunit 13 (144 aa).

N-acetylalanine is present on Ala-2. A helical membrane pass occupies residues 30–51 (LSGYSMFAVGIGALIFGYWRMM).

It belongs to the complex I NDUFA13 subunit family. As to quaternary structure, complex I is composed of 45 different subunits. Interacts with CARD15, but not with CARD4. Interacts with STAT3, but not with STAT1, STAT2 and STAT5A. Interacts with OLFM4.

The protein localises to the mitochondrion inner membrane. Its subcellular location is the nucleus. Functionally, accessory subunit of the mitochondrial membrane respiratory chain NADH dehydrogenase (Complex I), that is believed not to be involved in catalysis. Complex I functions in the transfer of electrons from NADH to the respiratory chain. The immediate electron acceptor for the enzyme is believed to be ubiquinone. Involved in the interferon/all-trans-retinoic acid (IFN/RA) induced cell death. This apoptotic activity is inhibited by interaction with viral IRF1. Prevents the transactivation of STAT3 target genes. May play a role in CARD15-mediated innate mucosal responses and serve to regulate intestinal epithelial cell responses to microbes. The sequence is that of NADH dehydrogenase [ubiquinone] 1 alpha subcomplex subunit 13 (Ndufa13) from Mus musculus (Mouse).